The primary structure comprises 186 residues: Peptide deformylase (186 aa).

The Fe cation site is built by C113 and H157. The active site involves E158. H161 serves as a coordination point for Fe cation.

The protein belongs to the polypeptide deformylase family. Fe(2+) is required as a cofactor.

The enzyme catalyses N-terminal N-formyl-L-methionyl-[peptide] + H2O = N-terminal L-methionyl-[peptide] + formate. Its function is as follows. Removes the formyl group from the N-terminal Met of newly synthesized proteins. Requires at least a dipeptide for an efficient rate of reaction. N-terminal L-methionine is a prerequisite for activity but the enzyme has broad specificity at other positions. This is Peptide deformylase from Malacoplasma penetrans (strain HF-2) (Mycoplasma penetrans).